Here is a 296-residue protein sequence, read N- to C-terminus: Bifunctional protein FolD (296 aa).

NADP(+) is bound by residues 168-170 (GRS), threonine 197, and valine 238.

This sequence belongs to the tetrahydrofolate dehydrogenase/cyclohydrolase family. As to quaternary structure, homodimer.

It catalyses the reaction (6R)-5,10-methylene-5,6,7,8-tetrahydrofolate + NADP(+) = (6R)-5,10-methenyltetrahydrofolate + NADPH. The enzyme catalyses (6R)-5,10-methenyltetrahydrofolate + H2O = (6R)-10-formyltetrahydrofolate + H(+). It functions in the pathway one-carbon metabolism; tetrahydrofolate interconversion. Catalyzes the oxidation of 5,10-methylenetetrahydrofolate to 5,10-methenyltetrahydrofolate and then the hydrolysis of 5,10-methenyltetrahydrofolate to 10-formyltetrahydrofolate. The sequence is that of Bifunctional protein FolD from Desulfotalea psychrophila (strain LSv54 / DSM 12343).